We begin with the raw amino-acid sequence, 357 residues long: 39 kDa FK506-binding nuclear protein (357 aa).

The residue at position 92 (serine 92) is a Phosphoserine. Positions lysine 113–glycine 251 are disordered. The segment covering aspartate 120–glutamate 182 has biased composition (acidic residues). 2 positions are modified to phosphoserine: serine 193 and serine 197. Positions glutamate 222–alanine 237 are enriched in basic and acidic residues. In terms of domain architecture, PPIase FKBP-type spans glycine 269–histidine 357.

The protein belongs to the FKBP-type PPIase family. As to expression, ubiquitously expressed, highest levels in ovary.

It is found in the nucleus. It carries out the reaction [protein]-peptidylproline (omega=180) = [protein]-peptidylproline (omega=0). Its function is as follows. PPIases accelerate the folding of proteins. May function in a signal transduction cascade during early development. The sequence is that of 39 kDa FK506-binding nuclear protein from Drosophila melanogaster (Fruit fly).